The primary structure comprises 118 residues: Iron-sulfur cluster insertion protein ErpA (118 aa).

The iron-sulfur cluster site is built by C46, C110, and C112.

The protein belongs to the HesB/IscA family. Homodimer. Iron-sulfur cluster is required as a cofactor.

In terms of biological role, required for insertion of 4Fe-4S clusters for at least IspG. This Psychromonas ingrahamii (strain DSM 17664 / CCUG 51855 / 37) protein is Iron-sulfur cluster insertion protein ErpA.